Consider the following 86-residue polypeptide: Large ribosomal subunit protein bL27 (86 aa).

Residues 1 to 24 (MAHKKGTGSTRNGRDSNSKRLGVK) are disordered.

The protein belongs to the bacterial ribosomal protein bL27 family.

The polypeptide is Large ribosomal subunit protein bL27 (Prochlorococcus marinus (strain MIT 9312)).